Consider the following 153-residue polypeptide: MLLYHIVGASVLICLLNETAKAIIGVDECQATPVIHFLQYPGCVPKPIPSYACRGRCSSYLQVSGSKIWQMERSCMCCQESGEREASVSLFCPRAKPGEKKFRKVITKAPLECMCRPCTSVEEYAIIPQEIAGFADEGPFTTSAHFRRSSDLQ.

A signal peptide spans 1 to 22; it reads MLLYHIVGASVLICLLNETAKA. Cystine bridges form between Cys29–Cys78, Cys43–Cys92, Cys53–Cys113, Cys57–Cys115, and Cys75–Cys118. The region spanning 29 to 119 is the CTCK domain; that stretch reads CQATPVIHFL…PLECMCRPCT (91 aa).

In terms of assembly, heterodimer of burs and pburs.

It is found in the secreted. Functionally, final heterodimeric neurohormone released at the end of the molting cycle, involved in the sclerotization (tanning) of the insect cuticle, melanization and wing spreading. This Apis mellifera (Honeybee) protein is Bursicon.